The chain runs to 39 residues: Cytochrome b559 subunit beta (39 aa).

A helical membrane pass occupies residues 14-30 (WLTVHGLAVPTVSFLGS). Histidine 18 contributes to the heme binding site.

It belongs to the PsbE/PsbF family. As to quaternary structure, heterodimer of an alpha subunit and a beta subunit. PSII is composed of 1 copy each of membrane proteins PsbA, PsbB, PsbC, PsbD, PsbE, PsbF, PsbH, PsbI, PsbJ, PsbK, PsbL, PsbM, PsbT, PsbX, PsbY, PsbZ, Psb30/Ycf12, at least 3 peripheral proteins of the oxygen-evolving complex and a large number of cofactors. It forms dimeric complexes. Heme b serves as cofactor.

It is found in the plastid. It localises to the chloroplast thylakoid membrane. This b-type cytochrome is tightly associated with the reaction center of photosystem II (PSII). PSII is a light-driven water:plastoquinone oxidoreductase that uses light energy to abstract electrons from H(2)O, generating O(2) and a proton gradient subsequently used for ATP formation. It consists of a core antenna complex that captures photons, and an electron transfer chain that converts photonic excitation into a charge separation. The polypeptide is Cytochrome b559 subunit beta (Cucumis sativus (Cucumber)).